A 75-amino-acid chain; its full sequence is uncharacterized protein (75 aa).

A SpoVT-AbrB domain is found at Thr-3–Glu-45.

The protein belongs to the VapB family.

This is an uncharacterized protein from Escherichia coli (strain K12).